The chain runs to 502 residues: Glycerol kinase (502 aa).

T14 contributes to the ADP binding site. ATP-binding residues include T14, T15, and S16. T14 contributes to the sn-glycerol 3-phosphate binding site. Residue R18 participates in ADP binding. R84, E85, Y136, and D246 together coordinate sn-glycerol 3-phosphate. 5 residues coordinate glycerol: R84, E85, Y136, D246, and Q247. ADP-binding residues include T268 and G311. Positions 268, 311, 315, and 412 each coordinate ATP. 2 residues coordinate ADP: G412 and N416.

Belongs to the FGGY kinase family. Homotetramer and homodimer (in equilibrium). Heterodimer with EIIA-Glc. Binds 1 zinc ion per glycerol kinase EIIA-Glc dimer. The zinc ion is important for dimerization.

The enzyme catalyses glycerol + ATP = sn-glycerol 3-phosphate + ADP + H(+). It functions in the pathway polyol metabolism; glycerol degradation via glycerol kinase pathway; sn-glycerol 3-phosphate from glycerol: step 1/1. With respect to regulation, activity of this regulatory enzyme is affected by several metabolites. Allosterically and non-competitively inhibited by fructose 1,6-bisphosphate (FBP) and unphosphorylated phosphocarrier protein EIIA-Glc (III-Glc), an integral component of the bacterial phosphotransferase (PTS) system. Functionally, key enzyme in the regulation of glycerol uptake and metabolism. Catalyzes the phosphorylation of glycerol to yield sn-glycerol 3-phosphate. This Salmonella typhimurium (strain LT2 / SGSC1412 / ATCC 700720) protein is Glycerol kinase.